The following is a 341-amino-acid chain: Phosphoribosylformylglycinamidine cyclo-ligase (341 aa).

This sequence belongs to the AIR synthase family.

It localises to the cytoplasm. It carries out the reaction 2-formamido-N(1)-(5-O-phospho-beta-D-ribosyl)acetamidine + ATP = 5-amino-1-(5-phospho-beta-D-ribosyl)imidazole + ADP + phosphate + H(+). The protein operates within purine metabolism; IMP biosynthesis via de novo pathway; 5-amino-1-(5-phospho-D-ribosyl)imidazole from N(2)-formyl-N(1)-(5-phospho-D-ribosyl)glycinamide: step 2/2. The sequence is that of Phosphoribosylformylglycinamidine cyclo-ligase from Alkaliphilus oremlandii (strain OhILAs) (Clostridium oremlandii (strain OhILAs)).